A 355-amino-acid polypeptide reads, in one-letter code: MGPGRCLLTALLLLALAPPPEASQYCGRLEYWNPDNKCCSSCLQRFGPPPCPDYEFRENCGLNDHGDFVTPPFRKCSSGQCNPDGAELCSPCGGGAVTPTPAAGGGRTPWRCRERPVPAKGHCPLTPGNPGAPSSQERSSPASSIAWRTPEPVPQQAWPNFLPLVVLVLLLTLAVIAILLFILLWHLCWPKEKADPYPYPGLVCGVPNTHTPSSSHLSSPGALETGDTWKEASLLPLLSRELSSLASQPLSRLLDELEVLEELIVLLDPEPGPGGGMAHGTTRHLAARYGLPAAWSTFAYSLRPSRSPLRALIEMVVAREPSASLGQLGTHLAQLGRADALRVLSKLGSSGVCWA.

The N-terminal stretch at 1 to 22 (MGPGRCLLTALLLLALAPPPEA) is a signal peptide. Residues 23–163 (SQYCGRLEYW…PQQAWPNFLP (141 aa)) are Extracellular-facing. Residues 120–147 (KGHCPLTPGNPGAPSSQERSSPASSIAW) form a disordered region. Over residues 132 to 144 (APSSQERSSPASS) the composition is skewed to low complexity. Residues 164 to 184 (LVVLVLLLTLAVIAILLFILL) form a helical membrane-spanning segment. Residues 185–355 (WHLCWPKEKA…KLGSSGVCWA (171 aa)) lie on the Cytoplasmic side of the membrane.

The protein resides in the cell membrane. In terms of biological role, probable cell membrane receptor for the IGF-like family proteins. Binds IGFL1 and IGFL3 with a higher affinity. May also bind IGFL2. The chain is IGF-like family receptor 1 (IGFLR1) from Homo sapiens (Human).